The primary structure comprises 216 residues: Cytochrome c biogenesis ATP-binding export protein CcmA (216 aa).

Residues 18-216 (LQVEGLAGRR…AHARTLEISA (199 aa)) form the ABC transporter domain. An ATP-binding site is contributed by 50–57 (GHNGSGKT).

It belongs to the ABC transporter superfamily. CcmA exporter (TC 3.A.1.107) family. In terms of assembly, the complex is composed of two ATP-binding proteins (CcmA) and two transmembrane proteins (CcmB).

The protein resides in the cell inner membrane. The catalysed reaction is heme b(in) + ATP + H2O = heme b(out) + ADP + phosphate + H(+). Part of the ABC transporter complex CcmAB involved in the biogenesis of c-type cytochromes; once thought to export heme, this seems not to be the case, but its exact role is uncertain. Responsible for energy coupling to the transport system. In Nitrosococcus oceani (strain ATCC 19707 / BCRC 17464 / JCM 30415 / NCIMB 11848 / C-107), this protein is Cytochrome c biogenesis ATP-binding export protein CcmA.